Here is a 62-residue protein sequence, read N- to C-terminus: Enterocin E-760 (62 aa).

The protein resides in the secreted. Its function is as follows. Bacteriocin active against the Gram-negative bacteria S.enteritidis, S.choleraesuis, S.typhimurium, S.gallinarum, E.coli O157:H7, Y.enterocolitica, C.freundii, K.pneumoniae, S.dysentriae, P.aeruginosa, P.mirabilis, M.morganii, C.jejuni and 20 other Campylobacter isolates, and the Gram-positive bacteria S.aureus, S.epidermidis and L.monocytogenes. This Enterococcus sp protein is Enterocin E-760.